Consider the following 246-residue polypeptide: uncharacterized protein (246 aa).

6 consecutive transmembrane segments (helical) span residues 7–27 (KVTLVSLILMAVFQFFMALII), 50–70 (LNILLQALTIVIAATIVSMEF), 99–119 (VSFYLYLAYYILALLFGLLFF), 135–155 (LALIGSNWLEAVMMGLFGLLC), 163–183 (AVAVVVSFVVLYGASTLVQLM), and 219–239 (FSIGILIIHAIFFIVVGWWCF).

The protein localises to the cell membrane. This is an uncharacterized protein from Bacillus subtilis (strain 168).